Here is a 155-residue protein sequence, read N- to C-terminus: Interleukin-2 (155 aa).

The N-terminal stretch at 1 to 20 (MYKIQLLSCIALTLALVANG) is a signal peptide. A glycan (O-linked (GalNAc...) threonine) is linked at threonine 23. A disulfide bridge links cysteine 79 with cysteine 127.

Belongs to the IL-2 family.

It localises to the secreted. Cytokine produced by activated CD4-positive helper T-cells and to a lesser extend activated CD8-positive T-cells and natural killer (NK) cells that plays pivotal roles in the immune response and tolerance. Binds to a receptor complex composed of either the high-affinity trimeric IL-2R (IL2RA/CD25, IL2RB/CD122 and IL2RG/CD132) or the low-affinity dimeric IL-2R (IL2RB and IL2RG). Interaction with the receptor leads to oligomerization and conformation changes in the IL-2R subunits resulting in downstream signaling starting with phosphorylation of JAK1 and JAK3. In turn, JAK1 and JAK3 phosphorylate the receptor to form a docking site leading to the phosphorylation of several substrates including STAT5. This process leads to activation of several pathways including STAT, phosphoinositide-3-kinase/PI3K and mitogen-activated protein kinase/MAPK pathways. Functions as a T-cell growth factor and can increase NK-cell cytolytic activity as well. Promotes strong proliferation of activated B-cells and subsequently immunoglobulin production. Plays a pivotal role in regulating the adaptive immune system by controlling the survival and proliferation of regulatory T-cells, which are required for the maintenance of immune tolerance. Moreover, participates in the differentiation and homeostasis of effector T-cell subsets, including Th1, Th2, Th17 as well as memory CD8-positive T-cells. This Moschus berezovskii (Chinese forest musk deer) protein is Interleukin-2 (IL2).